A 366-amino-acid chain; its full sequence is Phenylalanine--tRNA ligase alpha subunit (366 aa).

Glu264 is a Mg(2+) binding site.

Belongs to the class-II aminoacyl-tRNA synthetase family. Phe-tRNA synthetase alpha subunit type 1 subfamily. In terms of assembly, tetramer of two alpha and two beta subunits. Requires Mg(2+) as cofactor.

Its subcellular location is the cytoplasm. The enzyme catalyses tRNA(Phe) + L-phenylalanine + ATP = L-phenylalanyl-tRNA(Phe) + AMP + diphosphate + H(+). The sequence is that of Phenylalanine--tRNA ligase alpha subunit from Zymomonas mobilis subsp. mobilis (strain ATCC 31821 / ZM4 / CP4).